We begin with the raw amino-acid sequence, 450 residues long: UDP-N-acetylmuramoylalanine--D-glutamate ligase (450 aa).

ATP is bound at residue 119–125; the sequence is GSNGKTT.

This sequence belongs to the MurCDEF family.

It is found in the cytoplasm. It catalyses the reaction UDP-N-acetyl-alpha-D-muramoyl-L-alanine + D-glutamate + ATP = UDP-N-acetyl-alpha-D-muramoyl-L-alanyl-D-glutamate + ADP + phosphate + H(+). It participates in cell wall biogenesis; peptidoglycan biosynthesis. Cell wall formation. Catalyzes the addition of glutamate to the nucleotide precursor UDP-N-acetylmuramoyl-L-alanine (UMA). This Streptococcus pneumoniae (strain CGSP14) protein is UDP-N-acetylmuramoylalanine--D-glutamate ligase.